A 509-amino-acid polypeptide reads, in one-letter code: Bifunctional purine biosynthesis protein PurH (509 aa).

An MGS-like domain is found at 1 to 144; that stretch reads MKRALISVSD…KNYAAVTVVV (144 aa).

The protein belongs to the PurH family.

The enzyme catalyses (6R)-10-formyltetrahydrofolate + 5-amino-1-(5-phospho-beta-D-ribosyl)imidazole-4-carboxamide = 5-formamido-1-(5-phospho-D-ribosyl)imidazole-4-carboxamide + (6S)-5,6,7,8-tetrahydrofolate. It catalyses the reaction IMP + H2O = 5-formamido-1-(5-phospho-D-ribosyl)imidazole-4-carboxamide. It participates in purine metabolism; IMP biosynthesis via de novo pathway; 5-formamido-1-(5-phospho-D-ribosyl)imidazole-4-carboxamide from 5-amino-1-(5-phospho-D-ribosyl)imidazole-4-carboxamide (10-formyl THF route): step 1/1. The protein operates within purine metabolism; IMP biosynthesis via de novo pathway; IMP from 5-formamido-1-(5-phospho-D-ribosyl)imidazole-4-carboxamide: step 1/1. This chain is Bifunctional purine biosynthesis protein PurH, found in Listeria monocytogenes serotype 4b (strain F2365).